Consider the following 332-residue polypeptide: Ketol-acid reductoisomerase (NADP(+)) (332 aa).

Residues 1-182 (MATIYYEKDA…GCTRAGVLAT (182 aa)) enclose the KARI N-terminal Rossmann domain. NADP(+) is bound by residues 25-28 (YGSQ), Arg48, Ser53, and 83-86 (DELQ). The active site involves His108. Residue Gly134 coordinates NADP(+). Residues 183–328 (TFKEETETDL…KELRSMMPWL (146 aa)) enclose the KARI C-terminal knotted domain. Mg(2+)-binding residues include Asp191, Glu195, Glu227, and Glu231. Ser252 is a substrate binding site.

Belongs to the ketol-acid reductoisomerase family. Mg(2+) serves as cofactor.

The enzyme catalyses (2R)-2,3-dihydroxy-3-methylbutanoate + NADP(+) = (2S)-2-acetolactate + NADPH + H(+). The catalysed reaction is (2R,3R)-2,3-dihydroxy-3-methylpentanoate + NADP(+) = (S)-2-ethyl-2-hydroxy-3-oxobutanoate + NADPH + H(+). The protein operates within amino-acid biosynthesis; L-isoleucine biosynthesis; L-isoleucine from 2-oxobutanoate: step 2/4. Its pathway is amino-acid biosynthesis; L-valine biosynthesis; L-valine from pyruvate: step 2/4. In terms of biological role, involved in the biosynthesis of branched-chain amino acids (BCAA). Catalyzes an alkyl-migration followed by a ketol-acid reduction of (S)-2-acetolactate (S2AL) to yield (R)-2,3-dihydroxy-isovalerate. In the isomerase reaction, S2AL is rearranged via a Mg-dependent methyl migration to produce 3-hydroxy-3-methyl-2-ketobutyrate (HMKB). In the reductase reaction, this 2-ketoacid undergoes a metal-dependent reduction by NADPH to yield (R)-2,3-dihydroxy-isovalerate. In Methanocella arvoryzae (strain DSM 22066 / NBRC 105507 / MRE50), this protein is Ketol-acid reductoisomerase (NADP(+)).